The chain runs to 430 residues: Adenylosuccinate synthetase (430 aa).

GTP contacts are provided by residues 12 to 18 and 40 to 42; these read GDEGKGK and GHT. The active-site Proton acceptor is Asp13. The Mg(2+) site is built by Asp13 and Gly40. Residues 13 to 16, 38 to 41, Thr128, Arg142, Gln223, Thr238, and Arg302 contribute to the IMP site; these read DEGK and NAGH. His41 functions as the Proton donor in the catalytic mechanism. 298 to 304 contacts substrate; sequence TTTGRPR. GTP is bound by residues Arg304, 330–332, and 412–414; these read SID and SVG.

Belongs to the adenylosuccinate synthetase family. Homodimer. Mg(2+) is required as a cofactor.

It localises to the cytoplasm. The catalysed reaction is IMP + L-aspartate + GTP = N(6)-(1,2-dicarboxyethyl)-AMP + GDP + phosphate + 2 H(+). It functions in the pathway purine metabolism; AMP biosynthesis via de novo pathway; AMP from IMP: step 1/2. In terms of biological role, plays an important role in the de novo pathway of purine nucleotide biosynthesis. Catalyzes the first committed step in the biosynthesis of AMP from IMP. The chain is Adenylosuccinate synthetase from Streptococcus equi subsp. equi (strain 4047).